The sequence spans 181 residues: Adenylate kinase (181 aa).

Position 10-15 (10-15 (GAGKGT)) interacts with ATP. The segment at 30–59 (STGDLFRANIGEGTPLGLEAKSYIDAGKLV) is NMP. AMP contacts are provided by residues Thr31, Arg36, 57–59 (KLV), 85–88 (GFPR), and Gln92. The LID stretch occupies residues 126–132 (ARGRADD). An ATP-binding site is contributed by Arg127. Positions 129 and 140 each coordinate AMP. Gly166 lines the ATP pocket.

The protein belongs to the adenylate kinase family. As to quaternary structure, monomer.

Its subcellular location is the cytoplasm. It catalyses the reaction AMP + ATP = 2 ADP. The protein operates within purine metabolism; AMP biosynthesis via salvage pathway; AMP from ADP: step 1/1. Functionally, catalyzes the reversible transfer of the terminal phosphate group between ATP and AMP. Plays an important role in cellular energy homeostasis and in adenine nucleotide metabolism. This is Adenylate kinase from Corynebacterium aurimucosum (strain ATCC 700975 / DSM 44827 / CIP 107346 / CN-1) (Corynebacterium nigricans).